Consider the following 219-residue polypeptide: DAN domain family member 5 (219 aa).

The first 19 residues, 1–19, serve as a signal peptide directing secretion; sequence MLLFRAASLLPLLCFTVGA. Intrachain disulfides connect cysteine 118–cysteine 165, cysteine 132–cysteine 179, cysteine 142–cysteine 195, and cysteine 146–cysteine 197. Residues 118-198 form the CTCK domain; sequence CHALPFIQNV…VELVEECECE (81 aa).

Belongs to the DAN family. Interacts with nr1-a.

The protein resides in the secreted. Its function is as follows. Plays an important role in regulating the left-right axis by blocking a tgfb1 cascade in the right posterior paraxial mesoderm. Functions as an inhibitor of bmp, tgfb1, nodal, activin and wnt signaling in the ectoderm. May inhibit mesodermal signals, probably through an inhibition of nodal/activin pathways. Seems to regulates cell fate specification and competence before the onset of neural induction. Expression in the entire ectodermal region prior to gastrulation might act to prevent fate specification in the ectoderm and ensure the maintenance of the stem-cell-like properties exhibited by ectodermal cells. This chain is DAN domain family member 5 (dand5), found in Xenopus tropicalis (Western clawed frog).